The following is a 1900-amino-acid chain: MRFTRGLKASSSLRAKAIGRLTKLSTGAPNDQNSNGTTLDLITHTLPIFYSTNTSKIYTIPLTLSEWEVLTSLCVAIPTTLDLVETMLKEIIAPYFLETPRQRISDVLSSKFKLEQMRNPIELLTFQLTKFMIQACEQYPVLYENIGGIISTYFERVLKIFTIKQSGLLSLVGFINAFIQFPNSTELTKFTWKKLAKLVLRGSFLNEVDKILNSSATFTNDSIVQYYDAGNELSSAYLLELISRLQVSLISHLLNTSHVGANLSEFLLNQQYQFYKFDQEVADENDDTKCIDDFFFNVRSNKQFFTDMCKISLQFCSESHILDLSTDNRARFSFDTRAHYLQTLCLIPFIEDTESELFESFTNVVSESIDKFFLSDVVTPSLIKAIVASASLLNFFTEKLSLTLIRMFPLLVASPHITTETVNDVAKIFTTGLYPLNEDAIVSTIYSMNNLLAVSEDGSPVPVLRERQLTITSGKNIEKDYFPLRNSSASLDGTGALLGNTTVGQLSSHDVNSGATMTYHASLISNCVAATTTIASYYNTQSITALTISILTQKVNSMSKELDGVILNSLARLAPNTSLTEFSLLLKFFKSRTVIATKIDDSALLKNIIKAKCVISKELLARHFSSDLYFMYLHDLLDSIIASGEVERLEHHRPQTEISRVADQIATYLEPLAALLPVPGDTPLDINKDEVTTNKFRNAWFNFVIHGYHLGGPIVKRNFSFLLTIAYNSPPLASEFPANNKELSLEMNTILRRGSSNENIKQQKQQITEYFNTNIVQYRTTSSSKIMFLAAAVLLETIRCEAGDCSKTLLYFSDPSILSGSIEKCIAVLSVSMIRKYARLIQKGNDAIFNSKMIAQQLNNLLLCLSHREPTLQDAAFHACEIFIRSIPSSLCHHLSLYTLLDMLTALFDSILDSEAHKFEPRYEFKLKHSKTTILVPSSSSWRATTLSRLHKSAKEWVRILLNRSNQDTKILLQSYISDLGEYSRLNSVEFGVSFAMDMAGLILPADKELSRLTYYGPEKPNTISGFISLHSWRSKYLFDTAITSSPEDIKRQIGISTQNIRKNLTLGNKIITKDVTDFLDMATALLILGNGAPASLIYDIVHIPFEVFTSASLKIATNVWLTIITEKPEVAHLLLVEVCYCWMRSIDDNIGLYSRDHDLKGEEYQKMEYSPYDKAGINRDAKNASQAMQPHLHVIKFFASHFEGTLFQSDFLLKIFTKCALYGIKNLYKASLHPFARMIRHELLLFATLVLNASYKQGSKYMGRLSQEITNGALSWFKRPVAWPFGSNELKIKADLSVTRDLFLQLNKLSSLMSRHCGKDYKILNYFLASEIQQIQTWLTPTEKIEGADSNELTSDIVEATFAKDPTLAINLLQRCYSKKAEDVLVGLVAKHALMCVGSPSALDLFIKGSHLSSKKDLHATLYWAPVSPLKSINLFLPEWQGNSFILQFSIYSLESQDVNLAFFYVPQIVQCLRYDKTGYVERLILDTAKISVLFSHQIIWNMLANCYKDDEGIQEDEIKPTLDRIRERMVSSFSQSHRDFYEREFEFFDEVTGISGKLKPYIKKSKAEKKHKIDEEMSKIEVKPDVYLPSNPDGVVIDIDRKSGKPLQSHAKAPFMATFKIKKDVKDPLTGKNKEVEKWQAAIFKVGDDCRQDVLALQLISLFRTIWSSIGLDVYVFPYRVTATAPGCGVIDVLPNSVSRDMLGREAVNGLYEYFTSKFGNESTIEFQNARNNFVKSLAGYSVISYLLQFKDRHNGNIMYDDQGHCLHIDFGFIFDIVPGGIKFEAVPFKLTKEMVKVMGGSPQTPAYLDFEELCIKAYLAARPHVEAIIECVNPMLGSGLPCFKGHKTIRNLRARFQPQKTDHEAALYMKALIRKSYESIFTKGYDEFQRLTNGIPY.

Ser459 bears the Phosphoserine mark. Positions Lys1345 to Arg1530 constitute a PIK helical domain. Residues Met1531–Val1648 form a pleckstrin homology (PH) domain conferring phosphoinositide binding specificity region. One can recognise a PI3K/PI4K catalytic domain in the interval Phe1617–Phe1884. Residues Ile1623–Asp1629 form a G-loop region. The segment at Gln1751 to Asn1759 is catalytic loop. Positions His1770–Thr1794 are activation loop.

It belongs to the PI3/PI4-kinase family. Type III PI4K subfamily.

It carries out the reaction a 1,2-diacyl-sn-glycero-3-phospho-(1D-myo-inositol) + ATP = a 1,2-diacyl-sn-glycero-3-phospho-(1D-myo-inositol 4-phosphate) + ADP + H(+). Functionally, acts on phosphatidylinositol (PI) in the first committed step in the production of the second messenger inositol 1,4,5,-trisphosphate. STT4 functions in PKC1 protein kinase pathway. In Saccharomyces cerevisiae (strain ATCC 204508 / S288c) (Baker's yeast), this protein is Phosphatidylinositol 4-kinase STT4 (STT4).